Reading from the N-terminus, the 448-residue chain is Beta-alanine--pyruvate aminotransferase (448 aa).

Residue W61 coordinates substrate. 120-121 (GS) lines the pyridoxal 5'-phosphate pocket. At K288 the chain carries N6-(pyridoxal phosphate)lysine. A pyridoxal 5'-phosphate-binding site is contributed by T327. R414 and Q421 together coordinate substrate.

The protein belongs to the class-III pyridoxal-phosphate-dependent aminotransferase family. As to quaternary structure, homotetramer. Pyridoxal 5'-phosphate serves as cofactor.

The enzyme catalyses 3-oxopropanoate + L-alanine = beta-alanine + pyruvate. Its activity is regulated as follows. Inhibited by gabaculine (5-amino-1,3-cyclohexadienylcarboxylic acid). Its function is as follows. Involved in the degradation of beta-alanine. Catalyzes the transfer of the amino group from beta-alanine to pyruvate to yield L-alanine and 3-oxopropanoate. It can also accept both 4-aminobutyrate and (S)-alpha-methylbenzylamine (MBA) as amino-group donors in the presence of pyruvate as an amine acceptor. This Pseudomonas aeruginosa (strain ATCC 15692 / DSM 22644 / CIP 104116 / JCM 14847 / LMG 12228 / 1C / PRS 101 / PAO1) protein is Beta-alanine--pyruvate aminotransferase (bauA).